We begin with the raw amino-acid sequence, 255 residues long: Hydroxyacylglutathione hydrolase (255 aa).

Positions 56, 58, 60, 61, 114, 133, and 171 each coordinate Zn(2+).

This sequence belongs to the metallo-beta-lactamase superfamily. Glyoxalase II family. In terms of assembly, monomer. The cofactor is Zn(2+).

It carries out the reaction an S-(2-hydroxyacyl)glutathione + H2O = a 2-hydroxy carboxylate + glutathione + H(+). It participates in secondary metabolite metabolism; methylglyoxal degradation; (R)-lactate from methylglyoxal: step 2/2. In terms of biological role, thiolesterase that catalyzes the hydrolysis of S-D-lactoyl-glutathione to form glutathione and D-lactic acid. This chain is Hydroxyacylglutathione hydrolase, found in Cereibacter sphaeroides (strain ATCC 17025 / ATH 2.4.3) (Rhodobacter sphaeroides).